A 306-amino-acid polypeptide reads, in one-letter code: Glutathione transport system permease protein GsiC (306 aa).

Residues 1-8 (MLNYVLKR) lie on the Cytoplasmic side of the membrane. Residues 9–29 (LLGLIPTLLIVAVLVFLFVHL) form a helical membrane-spanning segment. Residues 30 to 102 (LPGDPARLIA…SRFLPTLWLT (73 aa)) lie on the Periplasmic side of the membrane. One can recognise an ABC transmembrane type-1 domain in the interval 95-292 (FLPTLWLTIT…LEFILINLVV (198 aa)). A helical membrane pass occupies residues 103 to 123 (ITSMIWAVLFGMAIGIAAAVW). The Cytoplasmic portion of the chain corresponds to 124 to 134 (RNRWPDRVGMT). Residues 135–155 (LAVTGISFPAFALGMLLMQIF) traverse the membrane as a helical segment. The Periplasmic segment spans residues 156 to 168 (SVDLGWLPTVGAD). Residues 169 to 189 (SWQHYILPSLTLGAAVASVMA) form a helical membrane-spanning segment. At 190–228 (RFTRSSFVDVLSEDYMRTARAKGVSETWVVLKHGLRNAM) the chain is on the cytoplasmic side. The helical transmembrane segment at 229–249 (IPVVTMMGLQFGFLLGGSIVV) threads the bilayer. Over 250–278 (EKVFNWPGLGRLLVDSVDMRDYPVIQAEV) the chain is Periplasmic. A helical membrane pass occupies residues 279 to 299 (LLFSLEFILINLVVDVLYAAI). The Cytoplasmic segment spans residues 300–306 (NPAIRYK).

Belongs to the binding-protein-dependent transport system permease family. In terms of assembly, the complex is composed of two ATP-binding proteins (GsiA), two transmembrane proteins (GsiC and GsiD) and a solute-binding protein (GsiB).

The protein resides in the cell inner membrane. Its function is as follows. Part of the ABC transporter complex GsiABCD involved in glutathione import. Probably responsible for the translocation of the substrate across the membrane. This chain is Glutathione transport system permease protein GsiC, found in Salmonella choleraesuis (strain SC-B67).